Here is a 613-residue protein sequence, read N- to C-terminus: Zinc metalloproteinase-disintegrin-like MTP8 (613 aa).

The signal sequence occupies residues 1 to 20 (MIEVLLVTICFTVFPYQGSP). A propeptide spanning residues 21-191 (IILESGNVND…DETIEKISQL (171 aa)) is cleaved from the precursor. Positions 205 to 401 (KYIELYVVVD…VRPQCILNKP (197 aa)) constitute a Peptidase M12B domain. Ca(2+) is bound at residue glutamate 208. N-linked (GlcNAc...) asparagine glycosylation is present at asparagine 282. Residue aspartate 292 participates in Ca(2+) binding. Disulfide bonds link cysteine 316–cysteine 396, cysteine 356–cysteine 380, and cysteine 358–cysteine 363. Residues histidine 341, histidine 345, and histidine 351 each contribute to the Zn(2+) site. Residues cysteine 396, asparagine 399, asparagine 414, phenylalanine 416, glutamate 418, glutamate 421, and aspartate 424 each contribute to the Ca(2+) site. One can recognise a Disintegrin domain in the interval 409–495 (PPVCGNYFVE…KCPTDSFQRN (87 aa)). Disulfide bonds link cysteine 412-cysteine 441, cysteine 423-cysteine 436, cysteine 425-cysteine 431, cysteine 435-cysteine 458, cysteine 449-cysteine 455, cysteine 454-cysteine 480, cysteine 467-cysteine 487, cysteine 474-cysteine 506, cysteine 499-cysteine 511, cysteine 518-cysteine 568, cysteine 533-cysteine 575, cysteine 543-cysteine 577, cysteine 546-cysteine 556, cysteine 563-cysteine 601, and cysteine 595-cysteine 606. Asparagine 437 carries an N-linked (GlcNAc...) asparagine glycan. The D/ECD-tripeptide motif lies at 473–475 (DCD). The Ca(2+) site is built by aspartate 475, leucine 476, glutamate 478, and aspartate 490. Residues asparagine 550 and asparagine 572 are each glycosylated (N-linked (GlcNAc...) asparagine).

Belongs to the venom metalloproteinase (M12B) family. P-III subfamily. As to quaternary structure, monomer. It depends on Zn(2+) as a cofactor. In terms of tissue distribution, expressed by the venom gland.

Its subcellular location is the secreted. Functionally, snake venom zinc metalloproteinase that may impair hemostasis in the prey. The protein is Zinc metalloproteinase-disintegrin-like MTP8 of Drysdalia coronoides (White-lipped snake).